A 167-amino-acid chain; its full sequence is Epithelial membrane protein 2 (167 aa).

The chain crosses the membrane as a helical span at residues 1–21 (MLVLLAFIIAFHITSAALLFI). Asn44, Asn47, and Asn52 each carry an N-linked (GlcNAc...) asparagine glycan. A run of 3 helical transmembrane segments spans residues 67–87 (TMILSTILCCIAFFIFVLQLF), 95–115 (FVLTSIIQLMSCLCVMIAASI), and 143–163 (YILAWVAFACTFISGMMYLIL).

This sequence belongs to the PMP-22/EMP/MP20 family. As to quaternary structure, interacts with PTK2; regulates PTK2 activation and localization. Interacts with ITGB3; regulates the levels of the heterodimer ITGA5-ITGB3 integrin surface expression. Interacts with P2RX7 (via C-terminus). Interacts with ITGB1; the interaction may be direct or indirect and ITGB1 has a heterodimer form.

It is found in the golgi apparatus membrane. Its subcellular location is the cell membrane. The protein resides in the apical cell membrane. The protein localises to the membrane raft. It localises to the cytoplasm. It is found in the nucleus. Its subcellular location is the perinuclear region. In terms of biological role, functions as a key regulator of cell membrane composition by regulating protein surface expression. Also, plays a role in regulation of processes including cell migration, cell proliferation, cell contraction and cell adhesion. Regulates transepithelial migration of neutrophils into the alveolar lumen, potentially via mediation of cell surface expression of adhesion markers and lipid raft formation. Negatively regulates caveolae formation by reducing CAV1 expression and CAV1 amount by increasing lysosomal degradation. Facilitates surface trafficking and the formation of lipid rafts bearing GPI-anchor proteins. Regulates surface expression of MHC1 and ICAM1 proteins increasing susceptibility to T-cell mediated cytotoxicity. Regulates the plasma membrane expression of the integrin heterodimers ITGA6-ITGB1, ITGA5-ITGB3 and ITGA5-ITGB1 resulting in modulation of cell-matrix adhesion. Also regulates many processes through PTK2. Regulates blood vessel endothelial cell migration and angiogenesis by regulating VEGF protein expression through PTK2 activation. Regulates cell migration and cell contraction through PTK2 and SRC activation. Regulates focal adhesion density, F-actin conformation and cell adhesion capacity through interaction with PTK2. Positively regulates cell proliferation. Plays a role during cell death and cell blebbing. Promotes angiogenesis and vasculogenesis through induction of VEGFA via a HIF1A-dependent pathway. Also plays a role in embryo implantation by regulating surface trafficking of integrin heterodimer ITGA5-ITGB3. Plays a role in placental angiogenesis and uterine natural killer cell regulation at the maternal-fetal placental interface, however not required in the maternal tissues for a viable pregnancy. Involved in the early stages of embryogenic development and cardiogenesis, potentially via regulation of epithelial-mesenchymal transition timing. May play a role in glomerular filtration. This chain is Epithelial membrane protein 2 (EMP2), found in Pan troglodytes (Chimpanzee).